Here is a 137-residue protein sequence, read N- to C-terminus: Large ribosomal subunit protein uL16 (137 aa).

This sequence belongs to the universal ribosomal protein uL16 family. In terms of assembly, part of the 50S ribosomal subunit.

In terms of biological role, binds 23S rRNA and is also seen to make contacts with the A and possibly P site tRNAs. This Mesorhizobium japonicum (strain LMG 29417 / CECT 9101 / MAFF 303099) (Mesorhizobium loti (strain MAFF 303099)) protein is Large ribosomal subunit protein uL16.